We begin with the raw amino-acid sequence, 298 residues long: GTP cyclohydrolase FolE2 (298 aa).

It belongs to the GTP cyclohydrolase IV family.

It carries out the reaction GTP + H2O = 7,8-dihydroneopterin 3'-triphosphate + formate + H(+). It participates in cofactor biosynthesis; 7,8-dihydroneopterin triphosphate biosynthesis; 7,8-dihydroneopterin triphosphate from GTP: step 1/1. In terms of biological role, converts GTP to 7,8-dihydroneopterin triphosphate. The sequence is that of GTP cyclohydrolase FolE2 from Azotobacter vinelandii (strain DJ / ATCC BAA-1303).